The sequence spans 975 residues: Macrophage colony-stimulating factor 1 receptor 1 (975 aa).

The signal sequence occupies residues 1–17 (MQSFLPLLMGIMASASS). Residues 18 to 519 (VEWRHPVIWF…VEVSDKLFTS (502 aa)) lie on the Extracellular side of the membrane. Ig-like C2-type domains lie at 34–113 (SSEV…VYVK), 125–208 (SLRV…INVI), 221–310 (MDEY…LLVV), 329–407 (GLSV…FHVK), and 404–513 (FHVK…VEVS). Disulfide bonds link cysteine 49/cysteine 93, cysteine 140/cysteine 189, and cysteine 236/cysteine 292. N-linked (GlcNAc...) asparagine glycans are attached at residues asparagine 156, asparagine 165, asparagine 246, asparagine 250, asparagine 289, asparagine 301, asparagine 399, asparagine 420, and asparagine 451. A disulfide bond links cysteine 426 and cysteine 495. The helical transmembrane segment at 520 to 540 (TLIGAAGVLAIFLLLLVFLLY) threads the bilayer. Topologically, residues 541 to 975 (KYKQKPRFEI…LMKTNNYQFC (435 aa)) are cytoplasmic. The tract at residues 544 to 576 (QKPRFEIRWKIIEAREGNNYTFIDPTQLPYNEK) is regulatory juxtamembrane domain. The residue at position 563 (tyrosine 563) is a Phosphotyrosine; by autocatalysis. The Protein kinase domain occupies 584–918 (LKLGKVLGAG…MISQMINRLL (335 aa)). ATP contacts are provided by residues 590–598 (LGAGAFGKV) and lysine 619. A phosphotyrosine; by autocatalysis mark is found at tyrosine 702 and tyrosine 726. Aspartate 782 functions as the Proton acceptor in the catalytic mechanism. The interval 800–822 (DFGLARDIMNDSNYVVKGNARLP) is activation loop. 2 positions are modified to phosphotyrosine; by autocatalysis: tyrosine 813 and tyrosine 929. The disordered stretch occupies residues 939-963 (EGEACDEPKRYDPPCERSCDHEEEE). A compositionally biased stretch (basic and acidic residues) spans 944 to 958 (DEPKRYDPPCERSCD). Position 972 is a phosphotyrosine; by autocatalysis (tyrosine 972).

The protein belongs to the protein kinase superfamily. Tyr protein kinase family. CSF-1/PDGF receptor subfamily. As to quaternary structure, monomer. Homodimer. Interacts with CSF1. In terms of processing, autophosphorylated in response to CSF1 binding. autophosphorylation, leading to its degradation. Post-translationally, ubiquitinated. Becomes rapidly polyubiquitinated after autophosphorylation, leading to its degradation.

The protein resides in the cell membrane. It catalyses the reaction L-tyrosyl-[protein] + ATP = O-phospho-L-tyrosyl-[protein] + ADP + H(+). Present in an inactive conformation in the absence of bound ligand. CSF1 binding leads to dimerization and activation by autophosphorylation on tyrosine residues. Functionally, tyrosine-protein kinase that acts as a cell-surface receptor for CSF1 and plays an essential role in the regulation of survival, proliferation and differentiation of hematopoietic precursor cells, especially mononuclear phagocytes, such as macrophages and monocytes. Plays an important role in innate immunity and in inflammatory processes. Plays an important role in the regulation of osteoclast proliferation and differentiation, the regulation of bone resorption, and is required for normal bone development. Promotes reorganization of the actin cytoskeleton, regulates formation of membrane ruffles, cell adhesion and cell migration. Activates several signaling pathways in response to ligand binding. This chain is Macrophage colony-stimulating factor 1 receptor 1 (csf1r1), found in Takifugu rubripes (Japanese pufferfish).